We begin with the raw amino-acid sequence, 178 residues long: Ribosome maturation factor RimM (178 aa).

Residues 99–178 (QGEFYWRDLI…EITVDWDPGF (80 aa)) enclose the PRC barrel domain.

The protein belongs to the RimM family. In terms of assembly, binds ribosomal protein uS19.

The protein localises to the cytoplasm. In terms of biological role, an accessory protein needed during the final step in the assembly of 30S ribosomal subunit, possibly for assembly of the head region. Essential for efficient processing of 16S rRNA. May be needed both before and after RbfA during the maturation of 16S rRNA. It has affinity for free ribosomal 30S subunits but not for 70S ribosomes. The chain is Ribosome maturation factor RimM from Pseudoalteromonas translucida (strain TAC 125).